We begin with the raw amino-acid sequence, 127 residues long: Glycine cleavage system H protein (127 aa).

Residues Thr24–Arg105 enclose the Lipoyl-binding domain. N6-lipoyllysine is present on Lys65.

Belongs to the GcvH family. The glycine cleavage system is composed of four proteins: P, T, L and H. It depends on (R)-lipoate as a cofactor.

Its function is as follows. The glycine cleavage system catalyzes the degradation of glycine. The H protein shuttles the methylamine group of glycine from the P protein to the T protein. The polypeptide is Glycine cleavage system H protein (Methylococcus capsulatus (strain ATCC 33009 / NCIMB 11132 / Bath)).